The following is a 390-amino-acid chain: GTPase Obg (390 aa).

One can recognise an Obg domain in the interval 1 to 159; the sequence is MKFVDEATIL…RELTLELLLL (159 aa). The interval 128–147 is disordered; the sequence is SRFKSSVNRAPRQKTNGTKG. Residues 129-145 show a composition bias toward polar residues; sequence RFKSSVNRAPRQKTNGT. Residues 160–333 enclose the OBG-type G domain; the sequence is ADVGMLGLPN…LCWDVMNFLK (174 aa). GTP contacts are provided by residues 166-173, 191-195, 213-216, 283-286, and 314-316; these read GLPNAGKS, FTTLV, DIPG, NKVD, and SAA. Residues serine 173 and threonine 193 each coordinate Mg(2+).

This sequence belongs to the TRAFAC class OBG-HflX-like GTPase superfamily. OBG GTPase family. As to quaternary structure, monomer. It depends on Mg(2+) as a cofactor.

Its subcellular location is the cytoplasm. Its function is as follows. An essential GTPase which binds GTP, GDP and possibly (p)ppGpp with moderate affinity, with high nucleotide exchange rates and a fairly low GTP hydrolysis rate. Plays a role in control of the cell cycle, stress response, ribosome biogenesis and in those bacteria that undergo differentiation, in morphogenesis control. This chain is GTPase Obg, found in Pectobacterium atrosepticum (strain SCRI 1043 / ATCC BAA-672) (Erwinia carotovora subsp. atroseptica).